The chain runs to 102 residues: MHKARIKLTGTDPEKLAYVCDQLKKIAERTGVDMSGPIPLPTKRLVVPTRKSPDGEGTATWEKWEMRIHKRLVGIEADERAMRQVMKVNVPDNVSIEIELKS.

The protein belongs to the universal ribosomal protein uS10 family. Part of the 30S ribosomal subunit.

In terms of biological role, involved in the binding of tRNA to the ribosomes. This is Small ribosomal subunit protein uS10 from Methanothermobacter thermautotrophicus (strain ATCC 29096 / DSM 1053 / JCM 10044 / NBRC 100330 / Delta H) (Methanobacterium thermoautotrophicum).